We begin with the raw amino-acid sequence, 250 residues long: Developmental protein SEPALLATA 2 (250 aa).

In terms of domain architecture, MADS-box spans 3–57 (RGRVELKRIENKINRQVTFAKRRNGLLKKAYELSVLCDAEVSLIVFSNRGKLYEF). Residues 85–150 (AKELENSYRE…CIKTQYMLDQ (66 aa)) adopt a coiled-coil conformation. Residues 88-178 (LENSYREYLK…SMKLEDMIGV (91 aa)) enclose the K-box domain.

As to quaternary structure, heterodimer with AGAMOUS capable of binding to CArG-box sequences. Interacts with TT16/AGL32.

The protein localises to the nucleus. In terms of biological role, probable transcription factor. Functions with SEPALLATA1/AGL2 and SEPALLATA3/AGL9 to ensure proper development of petals, stamens and carpels and to prevent the indeterminate growth of the flower meristem. Forms a heterodimer via the K-box domain with AG, that could be involved in genes regulation during floral meristem development. In Arabidopsis thaliana (Mouse-ear cress), this protein is Developmental protein SEPALLATA 2 (SEP2).